Consider the following 442-residue polypeptide: tRNA pseudouridine(38/39) synthase (442 aa).

Catalysis depends on Asp-151, which acts as the Nucleophile. A substrate-binding site is contributed by Tyr-222.

This sequence belongs to the tRNA pseudouridine synthase TruA family.

The protein resides in the nucleus. It carries out the reaction uridine(38/39) in tRNA = pseudouridine(38/39) in tRNA. Formation of pseudouridines at positions 38 and 39 in the anticodon stem and loop of transfer RNAs. This Saccharomyces cerevisiae (strain ATCC 204508 / S288c) (Baker's yeast) protein is tRNA pseudouridine(38/39) synthase (DEG1).